A 599-amino-acid polypeptide reads, in one-letter code: UvrABC system protein C (599 aa).

The 79-residue stretch at 13–91 (NLPGVYRMIN…IKGFMPRYNV (79 aa)) folds into the GIY-YIG domain. Positions 200–235 (QQVMDELGEKMNEAAEKMEYELAAVYRDRIQSLRQV) constitute a UVR domain.

It belongs to the UvrC family. In terms of assembly, interacts with UvrB in an incision complex.

The protein resides in the cytoplasm. Its function is as follows. The UvrABC repair system catalyzes the recognition and processing of DNA lesions. UvrC both incises the 5' and 3' sides of the lesion. The N-terminal half is responsible for the 3' incision and the C-terminal half is responsible for the 5' incision. In Methylobacillus flagellatus (strain ATCC 51484 / DSM 6875 / VKM B-1610 / KT), this protein is UvrABC system protein C.